Consider the following 512-residue polypeptide: Cytochrome P450 4d1 (512 aa).

Heme contacts are provided by Glu316 and Cys456.

This sequence belongs to the cytochrome P450 family. It depends on heme as a cofactor.

The protein localises to the endoplasmic reticulum membrane. It is found in the microsome membrane. Its function is as follows. Involved in the metabolism of insect hormones and in the breakdown of synthetic insecticides. This Drosophila simulans (Fruit fly) protein is Cytochrome P450 4d1 (Cyp4d1).